Consider the following 337-residue polypeptide: Cytoskeleton protein RodZ (337 aa).

The Cytoplasmic portion of the chain corresponds to Met-1–Gly-111. One can recognise an HTH cro/C1-type domain in the interval Leu-19–Leu-71. A DNA-binding region (H-T-H motif) is located at residues Gln-30 to Glu-49. Residues Trp-112–Trp-132 traverse the membrane as a helical; Signal-anchor for type II membrane protein segment. The Periplasmic segment spans residues Trp-133–Gln-337. Over residues Thr-145–Asn-167 the composition is skewed to polar residues. A disordered region spans residues Thr-145–Ala-235. A compositionally biased stretch (low complexity) spans Thr-168–Gln-207. A compositionally biased stretch (polar residues) spans Asn-208–Val-218. Positions Asp-219–Ala-235 are enriched in low complexity.

This sequence belongs to the RodZ family.

Its subcellular location is the cell inner membrane. Cytoskeletal protein that is involved in cell-shape control through regulation of the length of the long axis. The chain is Cytoskeleton protein RodZ from Shigella boydii serotype 4 (strain Sb227).